The primary structure comprises 122 residues: Large ribosomal subunit protein uL14 (122 aa).

The protein belongs to the universal ribosomal protein uL14 family. As to quaternary structure, part of the 50S ribosomal subunit. Forms a cluster with proteins L3 and L19. In the 70S ribosome, L14 and L19 interact and together make contacts with the 16S rRNA in bridges B5 and B8.

Functionally, binds to 23S rRNA. Forms part of two intersubunit bridges in the 70S ribosome. The sequence is that of Large ribosomal subunit protein uL14 from Limosilactobacillus reuteri (strain DSM 20016) (Lactobacillus reuteri).